Consider the following 457-residue polypeptide: Adenylosuccinate synthetase isozyme 2 (457 aa).

Residues 40-46 (GDEGKGK) and 68-70 (GHT) each bind GTP. Catalysis depends on Asp41, which acts as the Proton acceptor. Positions 41 and 68 each coordinate Mg(2+). Substrate is bound at residue Asp41. IMP-binding positions include 41–44 (DEGK), 66–69 (NAGH), Thr163, Arg177, Asn256, Thr271, and Arg335. His69 (proton donor) is an active-site residue. Residue 331–337 (VTTGRKR) participates in substrate binding. GTP-binding positions include Arg337, 363–365 (KLD), and 445–448 (GVGK).

This sequence belongs to the adenylosuccinate synthetase family. Homodimer. Mg(2+) serves as cofactor.

The protein resides in the cytoplasm. Its subcellular location is the mitochondrion. It carries out the reaction IMP + L-aspartate + GTP = N(6)-(1,2-dicarboxyethyl)-AMP + GDP + phosphate + 2 H(+). Its pathway is purine metabolism; AMP biosynthesis via de novo pathway; AMP from IMP: step 1/2. Its activity is regulated as follows. Inhibited competitively by AMP and IMP and non-competitively by fructose 1,6-bisphosphate. Plays an important role in the de novo pathway and in the salvage pathway of purine nucleotide biosynthesis. Catalyzes the first committed step in the biosynthesis of AMP from IMP. The protein is Adenylosuccinate synthetase isozyme 2 (adss2) of Xenopus laevis (African clawed frog).